Here is a 220-residue protein sequence, read N- to C-terminus: uncharacterized protein (220 aa).

7 helical membrane-spanning segments follow: residues 25 to 45, 50 to 70, 74 to 94, 105 to 125, 135 to 155, 158 to 178, and 196 to 216; these read YFLL…SMSL, PGLI…YKLS, LGIL…GPIL, IVVL…AYVL, SGTI…SFFF, PMLY…GILY, and VSIF…FSIL.

It belongs to the BI1 family.

Its subcellular location is the cell membrane. This is an uncharacterized protein from Pasteurella multocida (strain Pm70).